The following is a 426-amino-acid chain: Histidine--tRNA ligase (426 aa).

This sequence belongs to the class-II aminoacyl-tRNA synthetase family. In terms of assembly, homodimer.

It localises to the cytoplasm. The enzyme catalyses tRNA(His) + L-histidine + ATP = L-histidyl-tRNA(His) + AMP + diphosphate + H(+). The polypeptide is Histidine--tRNA ligase (Microcystis aeruginosa (strain NIES-843 / IAM M-2473)).